Reading from the N-terminus, the 1178-residue chain is MQYVNGMDIVKSVYDEVKYLINYTTMPWTDLGEYEECSVQSIENPTEEGLIFKCIGEINTSPEIPLNVLYNANLQQIWDELCIESKKIEQLDSCNSVDYYSFGSPLGGAPRDFVFLRNFSVDFENKSAWVVIRSIHHESIPSPTYMKPSGWEFLQISPNKTRITLVVQINDLTIAPYLRINSVDLKRIYRNTGIQITHTLPNLIKYIKKNYKKEIENNFKKFKTPDLFNPNLNNNNNNNNNNNNNNNNNNNNNNNNNNNNNNNNQQQNIKNSNSNENNNNNSDSITNSNSNENLNEKDGKKILLPQLSEEFEFLDVDEELYDVDKTPTFMFKETSKTVGELEVNPVETGWNCFRKFNDYTFYYRDYDENSLDFACSGSSFIDASAEVIFSYIFSEYSCKIDQWTCGMKTLKKLDQVTSLERMSFRSVLAPKDVLSAVLVKQVNYFQKGIIFLGYRSLLKPSTIVKTGFWYSPSAYYIIPQERGCIIRYILKFRMYLPPSTYKIYPKKQILYVISEKTRATVEMIKYYSINPFYLHKRKQQEFPHWEGIDKFSELAEIFSNIQIRHSKPSLIINSPPNSNNHENEKKRKFRDNGINSTSISIPSTQFCFSSGGGSGGSSSSSSSTSSSLTFSPPQQLSSPTSSSSSSTFSNDSALIDNNQQLDINNNNDQEYLRFSENWESYITRKPFLLLISSGLHLRKPPKKKSPRYLESHNLKTCSLFDLLPYEMIQYIFTLMDATHLIRMSRTCKYFNRICLDDNIWRDLYNREFTKNSSDSLFKWSSIEDINLGTEKKQLLDLTFDHSKKKSNNSSPLSASSSSSSPSPPLLPPPPPPIPQLPDMLLENNNKYNNREQIQKNEHYWLNMFREKETINRHWRAGNGKVSNLRGHKGKISCLQMAPNQIFTGSKDKEFKSWNIATKQCESTTRCGASSVISFEKDNFTKLSTDIFPYCLFMHGIIRLGCSNGAIQHYNIATKEIEKEQRFLYVSNGFIFMKRDIYSYESNTVKLYDSETEQELQMIEIENTKINHCKIGRFENFCMIACTDKTVKLWDIDSNKTELVLNGHKGSVNCLDFLNDYQLITGSSDKTIRMWDIRNPSSAIHNIKSHSSKVKAISIYNNLRMCTGDEDSICLWNLEGSNEPNLLTTINNLSPVECLSIDDETMLAGFSDGEVSYYDFNSK.

Positions 1–208 (MQYVNGMDIV…TLPNLIKYIK (208 aa)) constitute an START domain. Disordered regions lie at residues 223-296 (KTPD…NLNE), 569-594 (SLII…DNGI), and 618-649 (SSSS…STFS). 2 stretches are compositionally biased toward low complexity: residues 229–293 (NPNL…SNEN) and 571–580 (IINSPPNSNN). The region spanning 717 to 763 (CSLFDLLPYEMIQYIFTLMDATHLIRMSRTCKYFNRICLDDNIWRDL) is the F-box domain. Positions 804 to 841 (KKSNNSSPLSASSSSSSPSPPLLPPPPPPIPQLPDMLL) are disordered. The segment covering 809 to 820 (SSPLSASSSSSS) has biased composition (low complexity). A compositionally biased stretch (pro residues) spans 821 to 835 (PSPPLLPPPPPPIPQ). 7 WD repeats span residues 886–923 (GHKG…CEST), 925–979 (RCGA…IEKE), 981–1017 (RFLY…ELQM), 1020–1059 (IENT…TELV), 1062–1100 (GHKG…SAIH), 1104–1141 (SHSS…EPNL), and 1146–1178 (NNLS…FNSK).

Substrate recognition component of a SCF (SKP1-CUL1-F-box protein) E3 ubiquitin-protein ligase complex which mediates the ubiquitination and subsequent proteasomal degradation of target proteins. The chain is F-box/WD repeat-containing protein A-like protein from Dictyostelium discoideum (Social amoeba).